The sequence spans 84 residues: U7-ctenitoxin-Pn1a (84 aa).

Residues 1–17 form the signal peptide; the sequence is MKLCILLVVLLITVVRA. A propeptide spanning residues 18–38 is cleaved from the precursor; sequence EEDILENEAEDISPAIKERSA. Cystine bridges form between Cys-41-Cys-56, Cys-48-Cys-61, Cys-55-Cys-78, and Cys-63-Cys-76.

Expressed by the venom gland.

Its subcellular location is the secreted. In terms of biological role, antagonist of L-type calcium channels (Cav1/CACNA1). Causes paralysis in the posterior limbs and gradual decreases in movement and aggression during 24 hours at dose levels of 5 ug per mouse. This chain is U7-ctenitoxin-Pn1a, found in Phoneutria nigriventer (Brazilian armed spider).